The primary structure comprises 701 residues: Elongation factor G 1 (701 aa).

A tr-type G domain is found at Lys-13 to Leu-288. Residues Ala-22 to Thr-29, Asp-86 to His-90, and Asn-140 to Asp-143 contribute to the GTP site.

It belongs to the TRAFAC class translation factor GTPase superfamily. Classic translation factor GTPase family. EF-G/EF-2 subfamily.

It is found in the cytoplasm. Functionally, catalyzes the GTP-dependent ribosomal translocation step during translation elongation. During this step, the ribosome changes from the pre-translocational (PRE) to the post-translocational (POST) state as the newly formed A-site-bound peptidyl-tRNA and P-site-bound deacylated tRNA move to the P and E sites, respectively. Catalyzes the coordinated movement of the two tRNA molecules, the mRNA and conformational changes in the ribosome. The polypeptide is Elongation factor G 1 (Bdellovibrio bacteriovorus (strain ATCC 15356 / DSM 50701 / NCIMB 9529 / HD100)).